A 323-amino-acid chain; its full sequence is NADH-ubiquinone oxidoreductase chain 1 (323 aa).

Helical transmembrane passes span 8-28, 74-94, 105-125, 145-165, 176-196, 236-256, 258-278, and 298-318; these read VINP…LTLL, FLFL…WAPM, LGVL…LGSG, ISYE…TGGF, SIWL…STLA, ILLM…IPAF, ELTA…FLWV, and FLPL…ALAG.

Belongs to the complex I subunit 1 family.

It localises to the mitochondrion inner membrane. It catalyses the reaction a ubiquinone + NADH + 5 H(+)(in) = a ubiquinol + NAD(+) + 4 H(+)(out). Functionally, core subunit of the mitochondrial membrane respiratory chain NADH dehydrogenase (Complex I) that is believed to belong to the minimal assembly required for catalysis. Complex I functions in the transfer of electrons from NADH to the respiratory chain. The immediate electron acceptor for the enzyme is believed to be ubiquinone. This Oncorhynchus mykiss (Rainbow trout) protein is NADH-ubiquinone oxidoreductase chain 1 (MT-ND1).